The primary structure comprises 225 residues: PKHD-type hydroxylase YbiX (225 aa).

Residues 78-177 form the Fe2OG dioxygenase domain; that stretch reads TLSTPLFNRY…RVASFMWIQS (100 aa). 3 residues coordinate Fe cation: H96, D98, and H158. Position 168 (R168) interacts with 2-oxoglutarate.

Requires Fe(2+) as cofactor. L-ascorbate is required as a cofactor.

In Escherichia coli O17:K52:H18 (strain UMN026 / ExPEC), this protein is PKHD-type hydroxylase YbiX.